A 561-amino-acid chain; its full sequence is Carboxylesterase 1F (561 aa).

Residues 1–17 (MFLSTLFLVSLATCVIC) form the signal peptide. A disulfide bridge connects residues cysteine 87 and cysteine 116. Serine 221 functions as the Acyl-ester intermediate in the catalytic mechanism. Cysteine 273 and cysteine 284 are joined by a disulfide. Residues glutamate 353 and histidine 466 each act as charge relay system in the active site. The short motif at 558-561 (HNEL) is the Prevents secretion from ER element.

Belongs to the type-B carboxylesterase/lipase family. In terms of tissue distribution, expressed in liver, white and brown adipose tissue, kidney, intestine, adrenal, heart and ovary. Not detected in muscle, lung, testis, brain and spleen.

The protein localises to the lipid droplet. It localises to the cytoplasm. Its subcellular location is the cytosol. It is found in the endoplasmic reticulum. The protein resides in the microsome. It catalyses the reaction a carboxylic ester + H2O = an alcohol + a carboxylate + H(+). The enzyme catalyses all-trans-retinyl hexadecanoate + H2O = all-trans-retinol + hexadecanoate + H(+). Functionally, involved in the detoxification of xenobiotics and in the activation of ester and amide prodrugs. Hydrolyzes retinyl esters. Hydrolyzes p-nitrophenyl butyrate (PNPB), triacylglycerol and monoacylglycerol. Shows higher activity against PNPB, a short-chain fatty acid ester, than against triolein, a long-chain fatty acid ester. Shows no detectable activity against diacylglycerol, cholesterol ester or phospholipids. May play a role in adipocyte lipolysis. The polypeptide is Carboxylesterase 1F (Mus musculus (Mouse)).